Consider the following 88-residue polypeptide: Cell division topological specificity factor (88 aa).

The protein belongs to the MinE family.

Functionally, prevents the cell division inhibition by proteins MinC and MinD at internal division sites while permitting inhibition at polar sites. This ensures cell division at the proper site by restricting the formation of a division septum at the midpoint of the long axis of the cell. This chain is Cell division topological specificity factor, found in Shewanella denitrificans (strain OS217 / ATCC BAA-1090 / DSM 15013).